Consider the following 43-residue polypeptide: Potassium channel toxin gamma-KTx 4.7 (43 aa).

Intrachain disulfides connect Cys5–Cys23, Cys11–Cys34, Cys20–Cys39, and Cys24–Cys41.

Belongs to the ergtoxin family. Gamma-KTx 4 subfamily. Expressed by the venom gland.

The protein resides in the secreted. Its function is as follows. Reversibly blocks Kv11/ERG potassium channels. The sequence is that of Potassium channel toxin gamma-KTx 4.7 from Centruroides limpidus (Mexican scorpion).